We begin with the raw amino-acid sequence, 103 residues long: MYAVFQSGGKQHRVEAGHTVRLEKLEVATGETIEFDQVLLVADGETVHVGAPLVEGGKVVAEVISHGRADKVTIVKFRRRKHHDKKMGHRQWFTEVKITAINA.

The protein belongs to the bacterial ribosomal protein bL21 family. In terms of assembly, part of the 50S ribosomal subunit. Contacts protein L20.

In terms of biological role, this protein binds to 23S rRNA in the presence of protein L20. This Shewanella pealeana (strain ATCC 700345 / ANG-SQ1) protein is Large ribosomal subunit protein bL21.